The chain runs to 312 residues: Fibrinogen-like protein 1 (312 aa).

The signal sequence occupies residues 1–22; it reads MAKMFSFILVTTALVMGRGSSA. The stretch at 39-60 forms a coiled coil; the sequence is LLETRVKQQQVKISQLLHEKQV. The 233-residue stretch at 74 to 306 folds into the Fibrinogen C-terminal domain; the sequence is LGGKRQYADC…SVVMKIRPND (233 aa). Disulfide bonds link Cys-83–Cys-112 and Cys-248–Cys-261.

Homodimer. Interacts (via the Fibrinogen C-terminal domain) with LAG3 (via Ig-like domains 1 and 2).

The protein resides in the secreted. Immune suppressive molecule that inhibits antigen-specific T-cell activation by acting as a major ligand of LAG3. Responsible for LAG3 T-cell inhibitory function. Binds LAG3 independently from MHC class II (MHC-II). Secreted by, and promotes growth of, hepatocytes. This is Fibrinogen-like protein 1 (FGL1) from Bos taurus (Bovine).